Consider the following 164-residue polypeptide: Small ribosomal subunit protein uS5 (164 aa).

Residues 10–73 (LEERVVAINR…EDAKKNLIEV (64 aa)) form the S5 DRBM domain.

It belongs to the universal ribosomal protein uS5 family. As to quaternary structure, part of the 30S ribosomal subunit. Contacts proteins S4 and S8.

In terms of biological role, with S4 and S12 plays an important role in translational accuracy. Functionally, located at the back of the 30S subunit body where it stabilizes the conformation of the head with respect to the body. The protein is Small ribosomal subunit protein uS5 of Streptococcus gordonii (strain Challis / ATCC 35105 / BCRC 15272 / CH1 / DL1 / V288).